The following is a 163-amino-acid chain: uncharacterized protein (163 aa).

A helical transmembrane segment spans residues 11-31; that stretch reads LSWFLLLVVVILIFFLLLSCL.

Its subcellular location is the membrane. This is an uncharacterized protein from Saccharomyces cerevisiae (strain ATCC 204508 / S288c) (Baker's yeast).